A 424-amino-acid chain; its full sequence is Galacturonokinase (424 aa).

Ser2 bears the N-acetylserine mark. Position 146–155 (146–155) interacts with ATP; the sequence is DSSGLSSSAA. Asp197 serves as the catalytic Proton acceptor.

It belongs to the GHMP kinase family. Mg(2+) serves as cofactor. The cofactor is Mn(2+). Requires Ca(2+) as cofactor. In terms of tissue distribution, expressed in roots, stems, leaves, flowers and young siliques. Higher expression in the elongating middle stem region than in the lower or upper stem region.

It catalyses the reaction D-galacturonate + ATP = 1-phospho-alpha-D-galacturonate + ADP + H(+). With respect to regulation, inhibited by EDTA and ADP. Functionally, sugar-1-kinase with a strict substrate specificity for the alpha-anomeric configuration of D-galacturonic acid (D-GalA) and ATP. Involved in the biosynthesis of UDP-galacturonic acid (UDP-GalA) from the salvaged GalA that is released during growth-dependent cell wall restructuring. The chain is Galacturonokinase (GALAK) from Arabidopsis thaliana (Mouse-ear cress).